We begin with the raw amino-acid sequence, 1235 residues long: ATP-dependent helicase/nuclease subunit A (1235 aa).

Residues 10–482 (SIWTDDQWSA…IDLNQNFRSR (473 aa)) form the UvrD-like helicase ATP-binding domain. Residue 31–38 (AAAGSGKT) coordinates ATP. The 291-residue stretch at 509-799 (QAALKLGASY…RLMTIHSSKG (291 aa)) folds into the UvrD-like helicase C-terminal domain.

Belongs to the helicase family. AddA subfamily. In terms of assembly, heterodimer of AddA and AddB/RexB. It depends on Mg(2+) as a cofactor.

The catalysed reaction is Couples ATP hydrolysis with the unwinding of duplex DNA by translocating in the 3'-5' direction.. It catalyses the reaction ATP + H2O = ADP + phosphate + H(+). The heterodimer acts as both an ATP-dependent DNA helicase and an ATP-dependent, dual-direction single-stranded exonuclease. Recognizes the chi site generating a DNA molecule suitable for the initiation of homologous recombination. The AddA nuclease domain is required for chi fragment generation; this subunit has the helicase and 3' -&gt; 5' nuclease activities. This is ATP-dependent helicase/nuclease subunit A from Bacillus velezensis (strain DSM 23117 / BGSC 10A6 / LMG 26770 / FZB42) (Bacillus amyloliquefaciens subsp. plantarum).